A 476-amino-acid polypeptide reads, in one-letter code: S-adenosylmethionine-dependent nucleotide dehydratase (476 aa).

A cytidylate kinase-like domain region spans residues 1–168 (MKTKITLSGF…LTANEVADLI (168 aa)). Residue 9–17 (GFAGTGKST) participates in ATP binding. Residues 176-400 (NAVSKIPSVN…HKDVETIVPE (225 aa)) enclose the Radical SAM core domain. Residues 183–476 (SVNFHLWQPC…DLRKEEVSYE (294 aa)) are prokaryotic viperin domain. Cysteine 192, cysteine 196, and cysteine 199 together coordinate [4Fe-4S] cluster.

It in the N-terminal section; belongs to the cytidylate kinase-like family. In the C-terminal section; belongs to the radical SAM superfamily. Viperin family. Requires [4Fe-4S] cluster as cofactor.

The catalysed reaction is GTP + AH2 + S-adenosyl-L-methionine = 3'-deoxy-3',4'-didehydro-GTP + 5'-deoxyadenosine + L-methionine + A + H2O + H(+). In terms of biological role, expression of pVip60 in E.coli (strain MG1655) confers resistance to phage T7; prevents culture collapse upon infection. Catalyzes the conversion of guanosine triphosphate (GTP) to 3'-deoxy-3',4'-didehydro-GTP (ddhGTP), probably via a SAM-dependent radical mechanism. The modified nucleotide represses transcription from T7 RNA polymerase-directed genes (possibly by acting as chain terminators), strongly suggesting these nucleotides block viral polymerase transcription. Its function is as follows. The N-terminus of the protein may generate NTP for use by the viperin domain. The sequence is that of S-adenosylmethionine-dependent nucleotide dehydratase from Lacinutrix mariniflava (strain JCM 13824 / KCCM 42306 / AKS432).